The chain runs to 155 residues: Protein SREK1IP1 (155 aa).

Residues 13–30 form a CCHC-type zinc finger; sequence AGCKKCGYPGHLTFECRN. The segment at 43 to 155 is disordered; that stretch reads DVSSTSTEDS…SSSSQSSSSD (113 aa). Residues 58–74 are compositionally biased toward basic and acidic residues; the sequence is EVARAPADKKNVTDTGK. Residues 75 to 93 show a composition bias toward basic residues; that stretch reads KKLKRKKEKKLKKHRKRLH. Positions 94–103 are enriched in basic and acidic residues; it reads SSSESDDNSK. Over residues 104 to 137 the composition is skewed to basic residues; it reads AKKRKSQKKEKRVKHKAKKGKQHKKDKRKEKRER. The span at 140–155 shows a compositional bias: low complexity; sequence SSSSSSSSSSQSSSSD.

Functionally, possible splicing regulator involved in the control of cellular survival. This chain is Protein SREK1IP1 (srek1ip1), found in Xenopus tropicalis (Western clawed frog).